The primary structure comprises 507 residues: Zinc finger protein Aiolos (507 aa).

Positions 1-85 (MEDIQPTVEL…PMGDAEESEM (85 aa)) are disordered. Thr20 carries the post-translational modification Phosphothreonine. Ser22 and Ser42 each carry phosphoserine. Basic and acidic residues-rich tracts occupy residues 33 to 46 (KPHEIENVDSREAP) and 56 to 72 (DSMKVKDEYSDRDENIM). Glycyl lysine isopeptide (Lys-Gly) (interchain with G-Cter in SUMO2) cross-links involve residues Lys61, Lys73, and Lys100. 3 C2H2-type zinc fingers span residues 117–139 (MNCDVCGLSCISFNVLMVHKRSH), 145–167 (FQCNQCGASFTQKGNLLRHIKLH), and 173–195 (FKCHLCNYACQRRDALTGHLRTH). A C2H2-type 4; atypical zinc finger spans residues 201-223 (YKCEFCGRSYKQRSSLEEHKERC). Residue Lys244 forms a Glycyl lysine isopeptide (Lys-Gly) (interchain with G-Cter in SUMO2) linkage. At Thr325 the chain carries Phosphothreonine. The segment at 370-396 (LPSERGLSPNNSAQDSTDTDSNHEDRQ) is disordered. Ser377 is subject to Phosphoserine. The C2H2-type 5 zinc-finger motif lies at 450–472 (FRCDHCHVLFLDYVMFTIHMGCH). The segment at 450–502 (FRCDHCHVLFLDYVMFTIHMGCHGFRDPFECNMCGYRSHDRYEFSSHIARGEH) is mediates homodimerization and heterodimerization. A C2H2-type 6; atypical zinc finger spans residues 478–502 (FECNMCGYRSHDRYEFSSHIARGEH).

This sequence belongs to the Ikaros C2H2-type zinc-finger protein family. As to quaternary structure, homodimer. Heterodimer with other IKAROS family members. Interacts with IKZF4 and IKZF5. Interacts with HRAS. Interacts with FOXP3; this interaction may be required for silencing target genes and regulating the suppressive activity of FOXP3-positive regulatory T-cells (Treg). Interacts with BCL21L isoform Bcl-X(L); this interaction blocks the anti-apoptotic role of BCL21L. Associates with histone deacetylase complexes containing HDAC1, MTA2 and SIN3A. Interacts with IKZF1. In terms of tissue distribution, expression is restricted to lymphoid tissues. Expressed at highest levels in spleen and at lower levels in the thymus and bone marrow. First detected in more committed lymphoid progenitors and strongly up-regulated as these differentiate into pre-T and pre-B cell precursors.

It localises to the nucleus. The protein localises to the cytoplasm. In terms of biological role, transcription factor that plays an important role in the regulation of lymphocyte differentiation. Binds to GGGAA. Plays an essential role in regulation of B-cell differentiation, proliferation and maturation to an effector state. Involved in regulating BCL2 expression and controlling apoptosis in T-cells in an IL2-dependent manner. The polypeptide is Zinc finger protein Aiolos (Ikzf3) (Mus musculus (Mouse)).